Consider the following 433-residue polypeptide: Mannan endo-1,4-beta-mannosidase 2 (433 aa).

Residues 1–28 form the signal peptide; sequence MAAPTGNGPVIPILGFLTCVAFIYLSFG. A glycan (N-linked (GlcNAc...) asparagine) is linked at asparagine 46. Tryptophan 98 contributes to the substrate binding site. Residue asparagine 169 is glycosylated (N-linked (GlcNAc...) asparagine). Asparagine 214 is a substrate binding site. Catalysis depends on glutamate 215, which acts as the Proton donor. Tyrosine 295 contacts substrate. The active-site Nucleophile is glutamate 335. Substrate is bound at residue tryptophan 377.

Belongs to the glycosyl hydrolase 5 (cellulase A) family. In terms of tissue distribution, expressed in roots, stems, leaves and seeds.

It is found in the secreted. The catalysed reaction is Random hydrolysis of (1-&gt;4)-beta-D-mannosidic linkages in mannans, galactomannans and glucomannans.. The polypeptide is Mannan endo-1,4-beta-mannosidase 2 (MAN2) (Arabidopsis thaliana (Mouse-ear cress)).